Reading from the N-terminus, the 513-residue chain is ATP synthase subunit alpha (513 aa).

ATP is bound at residue 169-176; sequence GDRQTGKT.

This sequence belongs to the ATPase alpha/beta chains family. F-type ATPases have 2 components, CF(1) - the catalytic core - and CF(0) - the membrane proton channel. CF(1) has five subunits: alpha(3), beta(3), gamma(1), delta(1), epsilon(1). CF(0) has three main subunits: a(1), b(2) and c(9-12). The alpha and beta chains form an alternating ring which encloses part of the gamma chain. CF(1) is attached to CF(0) by a central stalk formed by the gamma and epsilon chains, while a peripheral stalk is formed by the delta and b chains.

Its subcellular location is the cell inner membrane. The enzyme catalyses ATP + H2O + 4 H(+)(in) = ADP + phosphate + 5 H(+)(out). Its function is as follows. Produces ATP from ADP in the presence of a proton gradient across the membrane. The alpha chain is a regulatory subunit. This is ATP synthase subunit alpha from Idiomarina loihiensis (strain ATCC BAA-735 / DSM 15497 / L2-TR).